Consider the following 247-residue polypeptide: Sugar fermentation stimulation protein homolog (247 aa).

The protein belongs to the SfsA family.

This is Sugar fermentation stimulation protein homolog from Methanococcoides burtonii (strain DSM 6242 / NBRC 107633 / OCM 468 / ACE-M).